The following is a 446-amino-acid chain: D(1A) dopamine receptor (446 aa).

The Extracellular portion of the chain corresponds to 1-22 (MAPNTSTMDEAGLPAERDFSFR). The N-linked (GlcNAc...) asparagine glycan is linked to N4. Residues 23–48 (ILTACFLSLLILSTLLGNTLVCAAVI) form a helical membrane-spanning segment. Residues 49 to 59 (RFRHLRSKVTN) lie on the Cytoplasmic side of the membrane. A helical transmembrane segment spans residues 60-86 (FFVISLAVSDLLVAVLVMPWKAVAEIA). The Extracellular portion of the chain corresponds to 87 to 95 (GFWPLGPFC). The cysteines at positions 95 and 186 are disulfide-linked. A helical membrane pass occupies residues 96–118 (NIWVAFDIMCSTASILNLCVISV). The Cytoplasmic portion of the chain corresponds to 119-137 (DRYWAISSPFQYERKMTPK). The chain crosses the membrane as a helical span at residues 138–162 (AAFILISVAWTLSVLISFIPVQLSW). The Extracellular segment spans residues 163 to 192 (HKAKPTWPLDGNFTSLEDTEDDNCDTRLSR). A helical membrane pass occupies residues 193–218 (TYAISSSLISFYIPVAIMIVTYTSIY). Residues 219-272 (RIAQKQIRRISALERAAVHAKNCQTTAGNGNPVECAQSESSFKMSFKRETKVLK) are Cytoplasmic-facing. A helical membrane pass occupies residues 273-299 (TLSVIMGVFVCCWLPFFISNCMVPFCG). Over 300-312 (SEETQPFCIDSIT) the chain is Extracellular. A helical transmembrane segment spans residues 313 to 337 (FDVFVWFGWANSSLNPIIYAFNADF). Residues 338–446 (QKAFSTLLGC…PVTHSGQHST (109 aa)) lie on the Cytoplasmic side of the membrane. 2 S-palmitoyl cysteine lipidation sites follow: C347 and C351.

Belongs to the G-protein coupled receptor 1 family. In terms of assembly, interacts with DNAJC14 via its C-terminus PubMed:11331877. Interacts with DRD2. Interacts with DORIP1. N-glycosylated. In terms of tissue distribution, brain, in the striatum, the nucleus accumbens, and the olfactory tubercle.

The protein resides in the cell membrane. It is found in the endoplasmic reticulum membrane. It localises to the cell projection. The protein localises to the dendrite. Its subcellular location is the cilium membrane. The protein resides in the dendritic spine. Dopamine receptor whose activity is mediated by G proteins which activate adenylyl cyclase. In Rattus norvegicus (Rat), this protein is D(1A) dopamine receptor (Drd1).